We begin with the raw amino-acid sequence, 427 residues long: Adenylosuccinate synthetase (427 aa).

Residues 12-18 and 40-42 each bind GTP; these read GDEGKGK and GHT. Catalysis depends on aspartate 13, which acts as the Proton acceptor. Mg(2+)-binding residues include aspartate 13 and glycine 40. IMP-binding positions include 13–16, 38–41, threonine 130, arginine 144, glutamine 224, threonine 239, and arginine 303; these read DEGK and NAGH. The active-site Proton donor is histidine 41. 299-305 is a substrate binding site; the sequence is SVTGRPR. GTP is bound by residues arginine 305, 331–333, and 411–413; these read KLD and SVG.

It belongs to the adenylosuccinate synthetase family. As to quaternary structure, homodimer. It depends on Mg(2+) as a cofactor.

The protein localises to the cytoplasm. The catalysed reaction is IMP + L-aspartate + GTP = N(6)-(1,2-dicarboxyethyl)-AMP + GDP + phosphate + 2 H(+). Its pathway is purine metabolism; AMP biosynthesis via de novo pathway; AMP from IMP: step 1/2. Functionally, plays an important role in the de novo pathway of purine nucleotide biosynthesis. Catalyzes the first committed step in the biosynthesis of AMP from IMP. This is Adenylosuccinate synthetase from Sorangium cellulosum (strain So ce56) (Polyangium cellulosum (strain So ce56)).